The chain runs to 552 residues: Ribosomal lysine N-methyltransferase 3 (552 aa).

Residues 26–335 (SKCDIRESPL…QGQEIFNSYG (310 aa)) form the SET domain. Tyr-334 is a binding site for S-adenosyl-L-methionine. The disordered stretch occupies residues 399–432 (EDEEDEDGQAKSDNLSDDIESEEEEEEEEGDDSL). Positions 413–432 (LSDDIESEEEEEEEEGDDSL) are enriched in acidic residues.

Belongs to the class V-like SAM-binding methyltransferase superfamily.

It is found in the nucleus. Functionally, S-adenosyl-L-methionine-dependent protein-lysine N-methyltransferase that monomethylates 60S ribosomal protein L42 (RPL42A and RPL42B) at 'Lys-40'. The chain is Ribosomal lysine N-methyltransferase 3 from Saccharomyces cerevisiae (strain ATCC 204508 / S288c) (Baker's yeast).